Here is a 404-residue protein sequence, read N- to C-terminus: Probable protein phosphatase 2C 30 (404 aa).

Over residues 42 to 52 the composition is skewed to basic and acidic residues; that stretch reads AERGAEEETSG. Residues 42–72 are disordered; the sequence is AERGAEEETSGKRRRLDGGGGEASTDEEDRE. Residues 77-399 form the PPM-type phosphatase domain; that stretch reads RYGFTSVCGR…DNVSVVVVNL (323 aa). Mn(2+)-binding residues include D111, G112, and D298. Residues 321–369 are disordered; the sequence is GRRERNRSSPTSNLSPRQSSSSGDEAPNDGAPSAAAGSESDEESAAEED. Residues 330-343 show a composition bias toward polar residues; sequence PTSNLSPRQSSSSG. Position 390 (D390) interacts with Mn(2+).

This sequence belongs to the PP2C family. As to quaternary structure, interacts with PYL5 and SAPK2. Binding to PYL5 is dependent on the presence of abscisic acid (ABA). Interacts with PYL3, PYL5 and PYL9. Binding to PYL5 and PYL9 is dependent on the presence of ABA. It depends on Mg(2+) as a cofactor. Mn(2+) serves as cofactor.

The protein localises to the nucleus. It catalyses the reaction O-phospho-L-seryl-[protein] + H2O = L-seryl-[protein] + phosphate. The catalysed reaction is O-phospho-L-threonyl-[protein] + H2O = L-threonyl-[protein] + phosphate. Together with ABI5, PYL5 and SAPK2, is part of an abscisic acid (ABA) signaling unit that modulates seed germination and early seedling growth. The polypeptide is Probable protein phosphatase 2C 30 (Oryza sativa subsp. japonica (Rice)).